The following is a 122-amino-acid chain: Large-conductance mechanosensitive channel (122 aa).

2 consecutive transmembrane segments (helical) span residues 29–49 and 66–86; these read FGKIVSSLVADVIMPIIGLIF and GVFIQSIVDFLIVAGAIFLFI.

The protein belongs to the MscL family. Homopentamer.

It localises to the cell membrane. Functionally, channel that opens in response to stretch forces in the membrane lipid bilayer. May participate in the regulation of osmotic pressure changes within the cell. This Macrococcus caseolyticus (strain JCSC5402) (Macrococcoides caseolyticum) protein is Large-conductance mechanosensitive channel.